Here is a 414-residue protein sequence, read N- to C-terminus: Protein HIM1 (414 aa).

Its function is as follows. May participate in the control of processing of mutational intermediates appearing during error-prone bypass of DNA damage. The polypeptide is Protein HIM1 (HIM1) (Saccharomyces cerevisiae (strain ATCC 204508 / S288c) (Baker's yeast)).